A 693-amino-acid polypeptide reads, in one-letter code: Polyribonucleotide nucleotidyltransferase (693 aa).

Mg(2+) contacts are provided by aspartate 486 and aspartate 492. A KH domain is found at 553–612; that stretch reads PRFSSMRIDTEKIKDVIGKGGATIRSITEQTGTTIEIEDDGSVKIAATDKAAAANARRLI. Positions 622 to 690 constitute an S1 motif domain; it reads GRIYDAKVTK…RQGRVRLSIK (69 aa).

Belongs to the polyribonucleotide nucleotidyltransferase family. Component of the RNA degradosome, which is a multiprotein complex involved in RNA processing and mRNA degradation. It depends on Mg(2+) as a cofactor.

It localises to the cytoplasm. The enzyme catalyses RNA(n+1) + phosphate = RNA(n) + a ribonucleoside 5'-diphosphate. In terms of biological role, involved in mRNA degradation. Catalyzes the phosphorolysis of single-stranded polyribonucleotides processively in the 3'- to 5'-direction. This Dichelobacter nodosus (strain VCS1703A) protein is Polyribonucleotide nucleotidyltransferase.